Consider the following 60-residue polypeptide: 5-hydroxytryptamine receptor 2B (60 aa).

Topologically, residues 1 to 4 (VLCP) are extracellular. The helical transmembrane segment at 5–26 (AWLFLDVLFSTASIMHLCAISV) threads the bilayer. Ergotamine-binding residues include D10 and T15. The DRY motif; important for ligand-induced conformation changes signature appears at 27 to 29 (DRY). Residues 27-46 (DRYIAIKKPIQANQYNSRAT) are Cytoplasmic-facing. Residues 47-60 (AFIKITVVWLISIG) traverse the membrane as a helical segment.

It belongs to the G-protein coupled receptor 1 family. In terms of assembly, interacts (via C-terminus) with MPDZ. As to expression, detected in aorta, renal artery, jugular vein, vena cava and femoral vein.

It localises to the cell membrane. Its subcellular location is the synapse. It is found in the synaptosome. Its function is as follows. G-protein coupled receptor for 5-hydroxytryptamine (serotonin). Also functions as a receptor for various ergot alkaloid derivatives and psychoactive substances. Ligand binding causes a conformation change that triggers signaling via guanine nucleotide-binding proteins (G proteins) and modulates the activity of downstream effectors. HTR2B is coupled to G(q)/G(11) G alpha proteins and activates phospholipase C-beta, releasing diacylglycerol (DAG) and inositol 1,4,5-trisphosphate (IP3) second messengers that modulate the activity of phosphatidylinositol 3-kinase and promote the release of Ca(2+) ions from intracellular stores, respectively. Beta-arrestin family members inhibit signaling via G proteins and mediate activation of alternative signaling pathways. Plays a role in the regulation of dopamine and 5-hydroxytryptamine release, 5-hydroxytryptamine uptake and in the regulation of extracellular dopamine and 5-hydroxytryptamine levels, and thereby affects neural activity. May play a role in the perception of pain. Plays a role in the regulation of behavior, including impulsive behavior. Required for normal proliferation of embryonic cardiac myocytes and normal heart development. Protects cardiomyocytes against apoptosis. Plays a role in the adaptation of pulmonary arteries to chronic hypoxia. Plays a role in vasoconstriction. Required for normal osteoblast function and proliferation, and for maintaining normal bone density. Required for normal proliferation of the interstitial cells of Cajal in the intestine. The sequence is that of 5-hydroxytryptamine receptor 2B (HTR2B) from Sus scrofa (Pig).